Here is a 370-residue protein sequence, read N- to C-terminus: Tyrosine-protein kinase transforming protein SEA (370 aa).

In terms of domain architecture, Protein kinase spans 60–323 (THRSRVIGRG…GLVCELERVL (264 aa)). ATP-binding positions include 66–74 (IGRGHFGSV) and K92. D186 serves as the catalytic Proton acceptor. Phosphotyrosine; by autocatalysis is present on Y216. A disordered region spans residues 345 to 370 (PPFPPAPRGQLPDSEDEEDEEEEVAE). The span at 357–370 (DSEDEEDEEEEVAE) shows a compositional bias: acidic residues.

This sequence belongs to the protein kinase superfamily. Tyr protein kinase family.

It carries out the reaction L-tyrosyl-[protein] + ATP = O-phospho-L-tyrosyl-[protein] + ADP + H(+). The protein is Tyrosine-protein kinase transforming protein SEA (V-SEA) of Galliformes.